The sequence spans 932 residues: MAALQKLPHCRKLFLLCFLLATLWEARAGQIRYSVREEIDRGSFVGNIAKDLGLEPLALAEQGVRIVSRGRSQLFALNPRSGSLVTANRIDREELCAQSAPCLLNFNILLEDKLTIYSVEVEITDINDNAPRFGVEELELKISETTTPGFRIPLKNAHDADVGENALQKYALNPNDHFSLDVRSGADGNKYPELVLERALDREEEAVHHLVLVASDGGDPVLSGTSRICVKVLDANDNAPVFTQPEYRISIPENTPVGTRILTVTATDADEGYYAQVVYFLEKSPGETSEVFELKSTSGELTIIKDLDYEDATFHEIDIEAQDGPGLLTRAKVIVTVLDVNDNAPEFYMTSATSSVSEDSLPGTIIGLFNVHDRDSGQNAFTTCSLPENLPFKLEKSVDNYYRLVTTRALDREQFSFYNITLTAKDGGNPSLSTDAHILLQVADINDNAPAFSRTSYSTYIPENNPRGASVFSVTAHDPDSNDNAHVTYSFVEDTVQGAPLSSYISINSDTGVLYALRSFDYEQLRDLQVWVIARDSGNPPLSSNVSLSLFVLDQNDNPPEILYPAFPTDGSTGVELAPRSAEPGYLVTKVVAVDRDSGQNAWLSYHLLKASEPGLFSVGLHTGEVRTARALLDRDALKQSLVVAVQDHGQPPLSATVTLTVAVADRIPDILADLGSLEPSAKPNDSDLTLYLVVAVAAVSCVFLAFVIVLLAHRLRRWHKSRLLQASGGSLTGMQSSHFVGVDGVRAFLQTYSHEVSLTADSRKSHLIFPQPNYADTLISQESCEKKDFLSAPQSLLEEEREETFSQQAPPNTDWRFSQAQRPGTSGSQNGDDTGTWPNNQFDTEMLQAMILASASEAADGSSTLGGGAGTMGLSARYGPQFTLQHVPDYRQNVYIPGSNATLTNAAGKRDGKAPAGGNGNKKKSGKKEKK.

The signal sequence occupies residues 1–28 (MAALQKLPHCRKLFLLCFLLATLWEARA). Cadherin domains lie at 29 to 133 (GQIR…APRF), 134 to 242 (GVEE…APVF), 243 to 347 (TQPE…APEF), 348 to 452 (YMTS…APAF), 453 to 562 (SRTS…PPEI), and 570 to 682 (DGST…EPSA). The Extracellular segment spans residues 29 to 692 (GQIRYSVREE…KPNDSDLTLY (664 aa)). Residues N419 and N545 are each glycosylated (N-linked (GlcNAc...) asparagine). An N-linked (GlcNAc...) asparagine glycan is attached at N685. The helical transmembrane segment at 693–713 (LVVAVAAVSCVFLAFVIVLLA) threads the bilayer. The Cytoplasmic segment spans residues 714-932 (HRLRRWHKSR…KKKSGKKEKK (219 aa)). Disordered stretches follow at residues 798–841 (LEEE…WPNN) and 902–932 (ATLTNAAGKRDGKAPAGGNGNKKKSGKKEKK). The segment covering 806–841 (FSQQAPPNTDWRFSQAQRPGTSGSQNGDDTGTWPNN) has biased composition (polar residues). Residues 922–932 (NKKKSGKKEKK) are compositionally biased toward basic residues.

Its subcellular location is the cell membrane. Its function is as follows. Potential calcium-dependent cell-adhesion protein. May be involved in the establishment and maintenance of specific neuronal connections in the brain. This chain is Protocadherin gamma-A2 (PCDHGA2), found in Pan troglodytes (Chimpanzee).